The sequence spans 2663 residues: Ankyrin repeat domain-containing protein 11 (2663 aa).

Disordered stretches follow at residues 1–90 and 128–169; these read MPKG…KEPV and SANS…ERGE. Basic and acidic residues-rich tracts occupy residues 21 to 54 and 69 to 90; these read MVEK…VRER and EQKD…KEPV. Over residues 128-155 the composition is skewed to polar residues; sequence SANSPVDTTPKHPSQSTVCQKGTPNSAS. Residues 156–169 are compositionally biased toward basic and acidic residues; it reads KTKDKVNKRNERGE. ANK repeat units follow at residues 167-196, 200-229, 233-262, and 266-292; these read RGET…DVNV, AGWT…EVNT, DDDT…NPQQ, and KGET…YTSS. The residue at position 276 (S276) is a Phosphoserine. 3 disordered regions span residues 289 to 380, 398 to 647, and 723 to 783; these read YTSS…SNSF, APKK…GQCS, and DTNK…NDLK. A compositionally biased stretch (acidic residues) spans 295–305; sequence SSTESSEEEDA. Positions 309-320 are enriched in polar residues; it reads APSSSVDGNNTD. The span at 356–376 shows a compositional bias: basic and acidic residues; it reads DRVPPVDDKHLLKKDYRKETK. A Phosphoserine modification is found at S408. T410 bears the Phosphothreonine mark. The residue at position 411 (S411) is a Phosphoserine. Positions 438-451 are enriched in basic and acidic residues; it reads KTREPSNAKQQKEK. Over residues 452 to 462 the composition is skewed to basic residues; it reads NKVKKKRKKET. Over residues 463–477 the composition is skewed to basic and acidic residues; sequence KGREVRFGKRSDKFC. Residues 481 to 493 show a composition bias toward acidic residues; sequence SESESSESGEDDR. Low complexity predominate over residues 513 to 531; it reads SLFSSLSASSTSSHGSSAA. A compositionally biased stretch (basic and acidic residues) spans 539-550; that stretch reads TDQHTKHWRTDN. Polar residues predominate over residues 551 to 562; sequence WKTISSPAWSEV. Low complexity predominate over residues 576–588; sequence ESDYSSEGSSVES. Basic residues-rich tracts occupy residues 591-602 and 629-641; these read PVRKRQEHRKRA and VKKH…HKNK. Residue S834 is modified to Phosphoserine. Composition is skewed to basic and acidic residues over residues 881–928, 935–1043, 1059–1090, and 1099–1112; these read VKED…EKHK, SEKD…KSIL, KKDT…KEKA, and FSEK…KEKS. Disordered regions lie at residues 881-1043 and 1059-1393; these read VKED…KSIL and KKDT…GQYE. At S1079 the chain carries Phosphoserine. T1120 carries the phosphothreonine modification. S1123 is subject to Phosphoserine. 3 stretches are compositionally biased toward basic and acidic residues: residues 1142–1301, 1330–1347, and 1359–1393; these read DLPR…DKIS, GDDK…LKEK, and KSHD…GQYE. The residue at position 1419 (T1419) is a Phosphothreonine. 5 stretches are compositionally biased toward basic and acidic residues: residues 1424 to 1446, 1466 to 1545, 1556 to 1574, 1587 to 1597, and 1605 to 1639; these read STEK…KELK, REKW…KGDP, APSK…KLLG, LSQKDLEIEER, and MKQM…DIPA. The tract at residues 1424–1710 is disordered; sequence STEKKDKNDS…TGVPTPTSVL (287 aa). A Phosphoserine modification is found at S1509. S1692 carries the post-translational modification Phosphoserine. Positions 1698 to 1710 are enriched in polar residues; the sequence is SRPTGVPTPTSVL. A Phosphoserine modification is found at S1792. A disordered region spans residues 1814 to 1836; it reads SVPAASSYDSPMPPSMEDRAPLP. The residue at position 1847 (S1847) is a Phosphoserine. Y1850 and Y1851 each carry phosphotyrosine. Phosphoserine occurs at positions 1852, 1859, and 1990. Disordered stretches follow at residues 1988–2019 and 2131–2406; these read PESP…PAPP and LDLG…STQQ. Low complexity-rich tracts occupy residues 2310–2324 and 2391–2406; these read IQPE…AEAP and RSTQ…STQQ. Residues 2369–2663 are important for protein degradation; sequence AKARGSEDDD…VNDDFVLLPA (295 aa).

As to quaternary structure, interacts with the PAS region of the p160 coactivators. Post-translationally, subject to proteasomal degradation which is probably essential to regulate its activity.

The protein localises to the nucleus. In terms of biological role, chromatin regulator which modulates histone acetylation and gene expression in neural precursor cells. May recruit histone deacetylases (HDACs) to the p160 coactivators/nuclear receptor complex to inhibit ligand-dependent transactivation. Has a role in proliferation and development of cortical neural precursors. May also regulate bone homeostasis. The polypeptide is Ankyrin repeat domain-containing protein 11 (ANKRD11) (Homo sapiens (Human)).